We begin with the raw amino-acid sequence, 146 residues long: Transcriptional regulator MraZ (146 aa).

SpoVT-AbrB domains lie at 7-54 and 83-126; these read NATN…GLDL and GVFV…QPEA.

This sequence belongs to the MraZ family. Forms oligomers.

The protein localises to the cytoplasm. It localises to the nucleoid. The polypeptide is Transcriptional regulator MraZ (Rhizobium rhizogenes (strain K84 / ATCC BAA-868) (Agrobacterium radiobacter)).